The following is a 575-amino-acid chain: Phosphoenolpyruvate-protein phosphotransferase (575 aa).

The Tele-phosphohistidine intermediate role is filled by His-189. 2 residues coordinate phosphoenolpyruvate: Arg-296 and Arg-332. Mg(2+)-binding residues include Glu-431 and Asp-455. Phosphoenolpyruvate contacts are provided by residues 454 to 455 (ND) and Arg-465. Residue Cys-502 is the Proton donor of the active site.

The protein belongs to the PEP-utilizing enzyme family. In terms of assembly, homodimer. It depends on Mg(2+) as a cofactor.

The protein resides in the cytoplasm. It catalyses the reaction L-histidyl-[protein] + phosphoenolpyruvate = N(pros)-phospho-L-histidyl-[protein] + pyruvate. In terms of biological role, general (non sugar-specific) component of the phosphoenolpyruvate-dependent sugar phosphotransferase system (sugar PTS). This major carbohydrate active-transport system catalyzes the phosphorylation of incoming sugar substrates concomitantly with their translocation across the cell membrane. Enzyme I transfers the phosphoryl group from phosphoenolpyruvate (PEP) to the phosphoryl carrier protein (HPr). The protein is Phosphoenolpyruvate-protein phosphotransferase (ptsI) of Salmonella typhimurium (strain LT2 / SGSC1412 / ATCC 700720).